We begin with the raw amino-acid sequence, 743 residues long: Putative pre-mRNA-splicing factor ATP-dependent RNA helicase DHX32 (743 aa).

Met1 carries the post-translational modification N-acetylmethionine. Positions 1–28 (MEEEGLECPNSSSEKRYFPESLDSSDGD) are disordered. Residues 72–238 (MENLLQNQIV…YGNVPVIEVK (167 aa)) form the Helicase ATP-binding domain. Position 85–92 (85–92 (GDAKCGKS)) interacts with ATP. The DEAH box signature appears at 185 to 188 (DDIH).

Belongs to the DEAD box helicase family. DEAH subfamily. In terms of tissue distribution, expressed in lymphoid tissues (at protein level). Expressed in brain, heart, skeletal muscle, colon, thymus, spleen, kidney, liver, small intestine, placenta, lung, lymphoid tissues and blood leukocytes.

The protein localises to the nucleus. It localises to the mitochondrion. It carries out the reaction ATP + H2O = ADP + phosphate + H(+). The chain is Putative pre-mRNA-splicing factor ATP-dependent RNA helicase DHX32 (DHX32) from Homo sapiens (Human).